Here is a 302-residue protein sequence, read N- to C-terminus: Dihydroorotate dehydrogenase B (NAD(+)), catalytic subunit (302 aa).

FMN contacts are provided by residues serine 20 and 44-45; that span reads KG. Residues lysine 44 and 68–72 each bind substrate; that span reads NSVGL. Residues asparagine 98 and asparagine 125 each coordinate FMN. Asparagine 125 is a substrate binding site. The Nucleophile role is filled by cysteine 128. FMN contacts are provided by lysine 163 and isoleucine 189. 190-191 provides a ligand contact to substrate; the sequence is NT. FMN-binding positions include glycine 215, 241–242, and 263–264; these read GG and GT.

It belongs to the dihydroorotate dehydrogenase family. Type 1 subfamily. As to quaternary structure, heterotetramer of 2 PyrK and 2 PyrD type B subunits. The cofactor is FMN.

The protein resides in the cytoplasm. It carries out the reaction (S)-dihydroorotate + NAD(+) = orotate + NADH + H(+). Its pathway is pyrimidine metabolism; UMP biosynthesis via de novo pathway; orotate from (S)-dihydroorotate (NAD(+) route): step 1/1. Its function is as follows. Catalyzes the conversion of dihydroorotate to orotate with NAD(+) as electron acceptor. This chain is Dihydroorotate dehydrogenase B (NAD(+)), catalytic subunit (pyrD), found in Thermoanaerobacter pseudethanolicus (strain ATCC 33223 / 39E) (Clostridium thermohydrosulfuricum).